The primary structure comprises 318 residues: Ribose-phosphate pyrophosphokinase 2 (318 aa).

96 to 101 (RQDKKD) lines the ATP pocket. Asp-128, His-130, Asp-139, and Asp-143 together coordinate Mg(2+). Residue His-130 participates in ATP binding. The segment at 212-227 (KDRVAILVDDMADTCG) is binding of phosphoribosylpyrophosphate.

It belongs to the ribose-phosphate pyrophosphokinase family. As to quaternary structure, homodimer. The active form is probably a hexamer composed of 3 homodimers. It depends on Mg(2+) as a cofactor.

It carries out the reaction D-ribose 5-phosphate + ATP = 5-phospho-alpha-D-ribose 1-diphosphate + AMP + H(+). Its pathway is metabolic intermediate biosynthesis; 5-phospho-alpha-D-ribose 1-diphosphate biosynthesis; 5-phospho-alpha-D-ribose 1-diphosphate from D-ribose 5-phosphate (route I): step 1/1. With respect to regulation, activated by magnesium and inorganic phosphate. Competitively or non-competitively inhibited by ADP, 2,3-bisphosphoglyceride or GDP. Catalyzes the synthesis of phosphoribosylpyrophosphate (PRPP) that is essential for nucleotide synthesis. The chain is Ribose-phosphate pyrophosphokinase 2 (prps2) from Xenopus laevis (African clawed frog).